A 300-amino-acid chain; its full sequence is Putative lysophosphatidic acid:oleoyl-CoA acyltransferase (300 aa).

Residues 32–52 (WILIVVVMILRVPLCIISVTL) form a helical membrane-spanning segment. Residues 115 to 120 (HSSPLD) carry the HXXXXD motif motif.

This sequence belongs to the 1-acyl-sn-glycerol-3-phosphate acyltransferase family.

It localises to the lipid droplet. The protein localises to the endoplasmic reticulum membrane. The protein resides in the golgi apparatus membrane. The catalysed reaction is a 1-acyl-sn-glycero-3-phosphate + an acyl-CoA = a 1,2-diacyl-sn-glycero-3-phosphate + CoA. Its function is as follows. Acyl-CoA-dependent lysophosphatidic acid acyltransferase with preference for oleoyl-CoA. Involved in triacylglyceride homeostasis and lipid droplet formation. Involved in vacuolar protein sorting. The chain is Putative lysophosphatidic acid:oleoyl-CoA acyltransferase (vps66) from Schizosaccharomyces pombe (strain 972 / ATCC 24843) (Fission yeast).